Consider the following 366-residue polypeptide: 3-dehydroquinate synthase (366 aa).

NAD(+)-binding positions include D71–K76, G105–D109, T129–T130, K142, K151, and C169–T172. Residues E184, H247, and H264 each contribute to the Zn(2+) site.

It belongs to the sugar phosphate cyclases superfamily. Dehydroquinate synthase family. Co(2+) is required as a cofactor. The cofactor is Zn(2+). Requires NAD(+) as cofactor.

The protein localises to the cytoplasm. It carries out the reaction 7-phospho-2-dehydro-3-deoxy-D-arabino-heptonate = 3-dehydroquinate + phosphate. The protein operates within metabolic intermediate biosynthesis; chorismate biosynthesis; chorismate from D-erythrose 4-phosphate and phosphoenolpyruvate: step 2/7. In terms of biological role, catalyzes the conversion of 3-deoxy-D-arabino-heptulosonate 7-phosphate (DAHP) to dehydroquinate (DHQ). The chain is 3-dehydroquinate synthase from Serratia proteamaculans (strain 568).